Consider the following 896-residue polypeptide: Protein translocase subunit SecA (896 aa).

Residues Gln87, 105-109 (GEGKT), and Asp512 each bind ATP. A disordered region spans residues 858–886 (RAGGEAEAAKPVVRDEKKVGRNDPCPCGS). Residues 869–878 (VVRDEKKVGR) are compositionally biased toward basic and acidic residues. Cys882, Cys884, Cys893, and Cys894 together coordinate Zn(2+).

The protein belongs to the SecA family. As to quaternary structure, monomer and homodimer. Part of the essential Sec protein translocation apparatus which comprises SecA, SecYEG and auxiliary proteins SecDF-YajC and YidC. Requires Zn(2+) as cofactor.

The protein resides in the cell inner membrane. It is found in the cytoplasm. It carries out the reaction ATP + H2O + cellular proteinSide 1 = ADP + phosphate + cellular proteinSide 2.. Part of the Sec protein translocase complex. Interacts with the SecYEG preprotein conducting channel. Has a central role in coupling the hydrolysis of ATP to the transfer of proteins into and across the cell membrane, serving as an ATP-driven molecular motor driving the stepwise translocation of polypeptide chains across the membrane. The chain is Protein translocase subunit SecA from Syntrophotalea carbinolica (strain DSM 2380 / NBRC 103641 / GraBd1) (Pelobacter carbinolicus).